The primary structure comprises 182 residues: Glycerol-3-phosphate acyltransferase 1 (182 aa).

5 consecutive transmembrane segments (helical) span residues 5-25 (MQFL…AYIV), 54-74 (GYFI…VSIA), 81-101 (STFV…PIVF), 117-137 (IAFD…FYLI), and 157-177 (ILYS…VLIL).

The protein belongs to the PlsY family. Probably interacts with PlsX.

It is found in the cell membrane. The catalysed reaction is an acyl phosphate + sn-glycerol 3-phosphate = a 1-acyl-sn-glycero-3-phosphate + phosphate. Its pathway is lipid metabolism; phospholipid metabolism. In terms of biological role, catalyzes the transfer of an acyl group from acyl-phosphate (acyl-PO(4)) to glycerol-3-phosphate (G3P) to form lysophosphatidic acid (LPA). This enzyme utilizes acyl-phosphate as fatty acyl donor, but not acyl-CoA or acyl-ACP. This Bacillus cereus (strain ATCC 10987 / NRS 248) protein is Glycerol-3-phosphate acyltransferase 1.